The chain runs to 521 residues: DEAD-box ATP-dependent RNA helicase 1 (521 aa).

The tract at residues 1 to 20 (MVVAMATKEEEGGPSSRVPH) is disordered. The Q motif motif lies at 36–65 (CPVAHLPRLDPRLVKPLQRMGIESFFPVQV). One can recognise a Helicase ATP-binding domain in the interval 72-302 (IGPGAFERDI…QLELQHPLLL (231 aa)). 85–92 (SPTGSGKT) lines the ATP pocket. Positions 213–216 (DETD) match the DEAD box motif. Positions 330–480 (SLIVLLQELR…SLPEESVETL (151 aa)) constitute a Helicase C-terminal domain. Residues 495–507 (LESEATKKSKSGD) show a composition bias toward basic and acidic residues. The disordered stretch occupies residues 495 to 521 (LESEATKKSKSGDKAPNASKRKRTINT).

Belongs to the DEAD box helicase family. DDX51/DBP6 subfamily.

The catalysed reaction is ATP + H2O = ADP + phosphate + H(+). The protein is DEAD-box ATP-dependent RNA helicase 1 of Oryza sativa subsp. japonica (Rice).